The sequence spans 130 residues: Small ribosomal subunit protein uS11c (130 aa).

Belongs to the universal ribosomal protein uS11 family. In terms of assembly, part of the 30S ribosomal subunit.

It localises to the plastid. It is found in the chloroplast. In Phaeodactylum tricornutum (strain CCAP 1055/1), this protein is Small ribosomal subunit protein uS11c.